We begin with the raw amino-acid sequence, 361 residues long: FK506-binding protein 39 kDa (361 aa).

Residues 122–256 are disordered; the sequence is LVDEEDEEEE…PSSPKTRTLK (135 aa). Residues 123–174 are compositionally biased toward acidic residues; it reads VDEEDEEEEESDEDYDLSPTEEDLVETVSGDEESEEESESEDNSASEEDELD. Ser192 carries the post-translational modification Phosphoserine. The span at 208 to 227 shows a compositional bias: basic and acidic residues; that stretch reads QKVEGTPVKEKKVAFAEKLE. At Thr213 the chain carries Phosphothreonine. The span at 241–252 shows a compositional bias: polar residues; sequence QASSNAPSSPKT. A Phosphoserine modification is found at Ser249. The 87-residue stretch at 275 to 361 folds into the PPIase FKBP-type domain; it reads GKKVEMRYIG…VFEVKLVRVH (87 aa).

It belongs to the FKBP-type PPIase family. FKBP3/4 subfamily.

It localises to the nucleus. The protein resides in the nucleolus. It catalyses the reaction [protein]-peptidylproline (omega=180) = [protein]-peptidylproline (omega=0). PPIase that acts as a histone chaperone. Histone proline isomerase that increases the rate of cis-trans isomerization at prolines on the histone H3 N-terminal tail. Proline isomerization influences H3 methylation thereby regulating gene expression. In Schizosaccharomyces pombe (strain 972 / ATCC 24843) (Fission yeast), this protein is FK506-binding protein 39 kDa.